The chain runs to 342 residues: Holliday junction branch migration complex subunit RuvB (342 aa).

The segment at M1 to Y181 is large ATPase domain (RuvB-L). ATP-binding positions include L20, R21, G62, K65, T66, T67, E128–Y130, R171, Y181, and R218. T66 lines the Mg(2+) pocket. The segment at T182–E252 is small ATPAse domain (RuvB-S). The head domain (RuvB-H) stretch occupies residues K255–K342. R310 and R315 together coordinate DNA.

It belongs to the RuvB family. In terms of assembly, homohexamer. Forms an RuvA(8)-RuvB(12)-Holliday junction (HJ) complex. HJ DNA is sandwiched between 2 RuvA tetramers; dsDNA enters through RuvA and exits via RuvB. An RuvB hexamer assembles on each DNA strand where it exits the tetramer. Each RuvB hexamer is contacted by two RuvA subunits (via domain III) on 2 adjacent RuvB subunits; this complex drives branch migration. In the full resolvosome a probable DNA-RuvA(4)-RuvB(12)-RuvC(2) complex forms which resolves the HJ.

The protein localises to the cytoplasm. The catalysed reaction is ATP + H2O = ADP + phosphate + H(+). In terms of biological role, the RuvA-RuvB-RuvC complex processes Holliday junction (HJ) DNA during genetic recombination and DNA repair, while the RuvA-RuvB complex plays an important role in the rescue of blocked DNA replication forks via replication fork reversal (RFR). RuvA specifically binds to HJ cruciform DNA, conferring on it an open structure. The RuvB hexamer acts as an ATP-dependent pump, pulling dsDNA into and through the RuvAB complex. RuvB forms 2 homohexamers on either side of HJ DNA bound by 1 or 2 RuvA tetramers; 4 subunits per hexamer contact DNA at a time. Coordinated motions by a converter formed by DNA-disengaged RuvB subunits stimulates ATP hydrolysis and nucleotide exchange. Immobilization of the converter enables RuvB to convert the ATP-contained energy into a lever motion, pulling 2 nucleotides of DNA out of the RuvA tetramer per ATP hydrolyzed, thus driving DNA branch migration. The RuvB motors rotate together with the DNA substrate, which together with the progressing nucleotide cycle form the mechanistic basis for DNA recombination by continuous HJ branch migration. Branch migration allows RuvC to scan DNA until it finds its consensus sequence, where it cleaves and resolves cruciform DNA. The protein is Holliday junction branch migration complex subunit RuvB of Clostridium botulinum (strain 657 / Type Ba4).